The sequence spans 275 residues: 2,3,4,5-tetrahydropyridine-2,6-dicarboxylate N-succinyltransferase (275 aa).

2 residues coordinate substrate: Arg-106 and Asp-143.

Belongs to the transferase hexapeptide repeat family. Homotrimer.

It is found in the cytoplasm. It carries out the reaction (S)-2,3,4,5-tetrahydrodipicolinate + succinyl-CoA + H2O = (S)-2-succinylamino-6-oxoheptanedioate + CoA. It functions in the pathway amino-acid biosynthesis; L-lysine biosynthesis via DAP pathway; LL-2,6-diaminopimelate from (S)-tetrahydrodipicolinate (succinylase route): step 1/3. This is 2,3,4,5-tetrahydropyridine-2,6-dicarboxylate N-succinyltransferase from Burkholderia pseudomallei (strain 1106a).